Here is a 196-residue protein sequence, read N- to C-terminus: CMRF35-like molecule 2 (196 aa).

A signal peptide spans 1 to 17 (MRLCAGLLLLCFQGCLS). The region spanning 18–122 (LTGPGSVSGY…DSWSRDPSVS (105 aa)) is the Ig-like V-type domain. The Extracellular portion of the chain corresponds to 18–171 (LTGPGSVSGY…QLWSLLSSIQ (154 aa)). Cys-36 and Cys-104 are joined by a disulfide. Residue Asn-84 is glycosylated (N-linked (GlcNAc...) asparagine). The chain crosses the membrane as a helical span at residues 172 to 192 (FQVLVFLKLPLFLSMLCAIFW). Topologically, residues 193 to 196 (VNRL) are cytoplasmic.

It belongs to the CD300 family. As to quaternary structure, interacts with TYROBP.

The protein resides in the cell membrane. Probably acts as an activating receptor. The polypeptide is CMRF35-like molecule 2 (Cd300e) (Mus musculus (Mouse)).